A 550-amino-acid chain; its full sequence is Carboxylesterase 4A (550 aa).

A signal peptide spans 1–20; the sequence is MNWILCLSLTLLLVVQTAWG. C88 and C116 are joined by a disulfide. S221 functions as the Acyl-ester intermediate in the catalytic mechanism. A disulfide bridge connects residues C273 and C284. The N-linked (GlcNAc...) asparagine glycan is linked to N276. The Charge relay system role is filled by E353. An N-linked (GlcNAc...) asparagine glycan is attached at N386. Catalysis depends on H465, which acts as the Charge relay system.

It belongs to the type-B carboxylesterase/lipase family.

Its subcellular location is the secreted. In terms of biological role, probable carboxylesterase. The polypeptide is Carboxylesterase 4A (CES4A) (Bos taurus (Bovine)).